The sequence spans 445 residues: Serine--tRNA ligase (445 aa).

L-serine is bound at residue 229–231 (TAE). Residues 260–262 (RKE) and Val276 each bind ATP. Glu283 lines the L-serine pocket. 347–350 (EVSS) serves as a coordination point for ATP. Ser383 contributes to the L-serine binding site.

The protein belongs to the class-II aminoacyl-tRNA synthetase family. Type-1 seryl-tRNA synthetase subfamily. As to quaternary structure, homodimer. The tRNA molecule binds across the dimer.

The protein resides in the cytoplasm. The catalysed reaction is tRNA(Ser) + L-serine + ATP = L-seryl-tRNA(Ser) + AMP + diphosphate + H(+). It carries out the reaction tRNA(Sec) + L-serine + ATP = L-seryl-tRNA(Sec) + AMP + diphosphate + H(+). It participates in aminoacyl-tRNA biosynthesis; selenocysteinyl-tRNA(Sec) biosynthesis; L-seryl-tRNA(Sec) from L-serine and tRNA(Sec): step 1/1. Functionally, catalyzes the attachment of serine to tRNA(Ser). Is also able to aminoacylate tRNA(Sec) with serine, to form the misacylated tRNA L-seryl-tRNA(Sec), which will be further converted into selenocysteinyl-tRNA(Sec). The protein is Serine--tRNA ligase of Thermomicrobium roseum (strain ATCC 27502 / DSM 5159 / P-2).